The primary structure comprises 571 residues: Glutamate--tRNA ligase (571 aa).

Positions 75–88 are enriched in basic and acidic residues; it reads GGPREDVARDKEGL. A disordered region spans residues 75 to 98; sequence GGPREDVARDKEGLKPLPGAEPGN. A 'HIGH' region motif is present at residues 105–115; sequence PNPSGPLHIGH.

This sequence belongs to the class-I aminoacyl-tRNA synthetase family. Glutamate--tRNA ligase type 2 subfamily.

The protein resides in the cytoplasm. The catalysed reaction is tRNA(Glu) + L-glutamate + ATP = L-glutamyl-tRNA(Glu) + AMP + diphosphate. Its function is as follows. Catalyzes the attachment of glutamate to tRNA(Glu) in a two-step reaction: glutamate is first activated by ATP to form Glu-AMP and then transferred to the acceptor end of tRNA(Glu). This is Glutamate--tRNA ligase from Methanopyrus kandleri (strain AV19 / DSM 6324 / JCM 9639 / NBRC 100938).